The primary structure comprises 361 residues: Chorismate synthase (361 aa).

Arginine 48 is a binding site for NADP(+). FMN is bound by residues 126–128, glycine 269, 302–306, and asparagine 328; these read RSS and KPVPS.

This sequence belongs to the chorismate synthase family. In terms of assembly, homotetramer. The cofactor is FMNH2.

The catalysed reaction is 5-O-(1-carboxyvinyl)-3-phosphoshikimate = chorismate + phosphate. It participates in metabolic intermediate biosynthesis; chorismate biosynthesis; chorismate from D-erythrose 4-phosphate and phosphoenolpyruvate: step 7/7. Its function is as follows. Catalyzes the anti-1,4-elimination of the C-3 phosphate and the C-6 proR hydrogen from 5-enolpyruvylshikimate-3-phosphate (EPSP) to yield chorismate, which is the branch point compound that serves as the starting substrate for the three terminal pathways of aromatic amino acid biosynthesis. This reaction introduces a second double bond into the aromatic ring system. The protein is Chorismate synthase of Treponema denticola (strain ATCC 35405 / DSM 14222 / CIP 103919 / JCM 8153 / KCTC 15104).